A 266-amino-acid chain; its full sequence is Phosphatidylglycerol--prolipoprotein diacylglyceryl transferase (266 aa).

7 helical membrane passes run 21 to 41 (LAIR…MWLA), 60 to 80 (LLFA…VLFY), 95 to 115 (VWTG…AMLW), 124 to 144 (FFSV…MGRM), 176 to 196 (SQLY…NIFI), 203 to 223 (GAVS…IEYF), and 236 to 256 (WISM…LLML). Arg143 contacts a 1,2-diacyl-sn-glycero-3-phospho-(1'-sn-glycerol).

This sequence belongs to the Lgt family.

The protein resides in the cell inner membrane. It carries out the reaction L-cysteinyl-[prolipoprotein] + a 1,2-diacyl-sn-glycero-3-phospho-(1'-sn-glycerol) = an S-1,2-diacyl-sn-glyceryl-L-cysteinyl-[prolipoprotein] + sn-glycerol 1-phosphate + H(+). Its pathway is protein modification; lipoprotein biosynthesis (diacylglyceryl transfer). Its function is as follows. Catalyzes the transfer of the diacylglyceryl group from phosphatidylglycerol to the sulfhydryl group of the N-terminal cysteine of a prolipoprotein, the first step in the formation of mature lipoproteins. The chain is Phosphatidylglycerol--prolipoprotein diacylglyceryl transferase from Photobacterium profundum (strain SS9).